Reading from the N-terminus, the 182-residue chain is UPF0148 protein VNG_2366C (182 aa).

The disordered stretch occupies residues 1 to 162 (MSNTDDGFDK…RASDADDPRT (162 aa)). Composition is skewed to basic and acidic residues over residues 7-33 (GFDK…ETAR) and 47-62 (DHCD…HDGE). The span at 105–122 (PDTSSSTAAATDDVPTAA) shows a compositional bias: low complexity. The span at 153-162 (RASDADDPRT) shows a compositional bias: basic and acidic residues.

Belongs to the UPF0148 family.

The sequence is that of UPF0148 protein VNG_2366C from Halobacterium salinarum (strain ATCC 700922 / JCM 11081 / NRC-1) (Halobacterium halobium).